The chain runs to 134 residues: Small ribosomal subunit protein uS8c (134 aa).

It belongs to the universal ribosomal protein uS8 family. In terms of assembly, part of the 30S ribosomal subunit.

The protein resides in the plastid. Its subcellular location is the chloroplast. Its function is as follows. One of the primary rRNA binding proteins, it binds directly to 16S rRNA central domain where it helps coordinate assembly of the platform of the 30S subunit. In Aethionema cordifolium (Lebanon stonecress), this protein is Small ribosomal subunit protein uS8c (rps8).